A 546-amino-acid polypeptide reads, in one-letter code: 2-isopropylmalate synthase (546 aa).

The region spanning 8–271 is the Pyruvate carboxyltransferase domain; it reads ILIFDTTLRD…NSFFKRNPDS (264 aa). Mn(2+) is bound by residues D17, H208, H210, and N244. The segment at 408–546 is regulatory domain; that stretch reads QLCLVQVSCG…NKTFLSNPAN (139 aa).

This sequence belongs to the alpha-IPM synthase/homocitrate synthase family. LeuA type 1 subfamily. In terms of assembly, homodimer. The cofactor is Mn(2+).

The protein localises to the cytoplasm. It carries out the reaction 3-methyl-2-oxobutanoate + acetyl-CoA + H2O = (2S)-2-isopropylmalate + CoA + H(+). It participates in amino-acid biosynthesis; L-leucine biosynthesis; L-leucine from 3-methyl-2-oxobutanoate: step 1/4. Functionally, catalyzes the condensation of the acetyl group of acetyl-CoA with 3-methyl-2-oxobutanoate (2-ketoisovalerate) to form 3-carboxy-3-hydroxy-4-methylpentanoate (2-isopropylmalate). This is 2-isopropylmalate synthase from Prochlorococcus marinus (strain MIT 9312).